The following is a 546-amino-acid chain: Cysteine--tRNA ligase (546 aa).

Cys-57 contacts Zn(2+). The short motif at 59 to 69 (ATVQSSPHIGH) is the 'HIGH' region element. Residues 211–236 (PSVDATGADKYNPVDPADASPDKHDP) form a disordered region. Zn(2+)-binding residues include Cys-270, His-295, and Glu-299. A 'KMSKS' region motif is present at residues 326–330 (KMSKS). Lys-329 contributes to the ATP binding site.

It belongs to the class-I aminoacyl-tRNA synthetase family. In terms of assembly, monomer. Zn(2+) serves as cofactor.

Its subcellular location is the cytoplasm. The enzyme catalyses tRNA(Cys) + L-cysteine + ATP = L-cysteinyl-tRNA(Cys) + AMP + diphosphate. The chain is Cysteine--tRNA ligase from Bifidobacterium longum (strain NCC 2705).